The sequence spans 464 residues: Molybdate transporter 2 (464 aa).

A Tonoplast targeting signal motif is present at residues 8 to 9 (LL). Transmembrane regions (helical) follow at residues 33 to 53 (LSGAVGDLGTFIPIVLTLTLV), 62 to 82 (LIFTGFYNIATGLLFDIPMPV), 116 to 136 (LLLGATGAMSFLYNIIPLPVV), 172 to 192 (IWLGLDGLILALAALLFIILS), 223 to 243 (LLSSIPSALIVFALGLVLCFI), 309 to 329 (VSISVGVMNLIGCWFGAMPVC), 348 to 368 (SVIFLGIGKLIVGLVFGNSFV), 374 to 394 (FPIGILGVLLLFAGIELAMAS), and 404 to 424 (FIMLVCAAVSMTGSSAALGFG).

The protein belongs to the SLC26A/SulP transporter (TC 2.A.53) family. As to expression, expressed in leaves. Not detected in roots, shoots and seeds.

It is found in the vacuole membrane. In terms of biological role, molybdate transporter required for vacuolar molybdate export during senescence. This chain is Molybdate transporter 2 (MOT2), found in Arabidopsis thaliana (Mouse-ear cress).